The following is a 424-amino-acid chain: MLPWKKHKFELLAEAPPRQASKPKGYAVSLHYSALSSLARACPEGALSRVGSMFRSKRKKLHITSEDPTYTVLYLGNATTIQARGDGCTDLAVGKIWSKSEAGRQGTKMKLTVSAQGIRMVHAEERALRRPGHLYLLHRVTYCVADARLPKVFAWVYRHELKHKAVMLRCHAVLVSKPEKAQAMALLLYQTSANALAEFKRLKRRDDARHQQQELVGAHTIPLVPLRKLLLHGPCCYKPPVERSRSAPKLGSITEDLLGEQQEEELQEEEEEHLEDCLEEEEEEDGVGDGDPAEEEAEAQRALVVAMQLECEDLLDPLENGHEEALGDGGVSLGPSSGTSLPLSVCASDMKAQLSQLISDLGDLSFGNDVSTLETDLRVTRLLSGESTGSESSIEGGGLDATPVSPGNPSGPADSTSLDEPYSG.

Positions 261 to 297 (QQEEELQEEEEEHLEDCLEEEEEEDGVGDGDPAEEEA) are enriched in acidic residues. Disordered regions lie at residues 261-299 (QQEE…EAEA) and 382-424 (LLSG…PYSG). The segment covering 382–394 (LLSGESTGSESSI) has biased composition (low complexity). Residues 405–418 (SPGNPSGPADSTSL) are compositionally biased toward polar residues.

This sequence belongs to the FAM43 family.

This chain is Protein FAM43A (Fam43a), found in Mus musculus (Mouse).